The following is a 25-amino-acid chain: Cytochrome c oxidase subunit 1 (25 aa).

The protein belongs to the heme-copper respiratory oxidase family. It depends on Cu(2+) as a cofactor. Heme serves as cofactor.

It is found in the cell inner membrane. It carries out the reaction 4 Fe(II)-[cytochrome c] + O2 + 8 H(+)(in) = 4 Fe(III)-[cytochrome c] + 2 H2O + 4 H(+)(out). Its pathway is energy metabolism; oxidative phosphorylation. Subunit I and II form the functional core of the enzyme complex. Electrons originating in cytochrome c are transferred via heme a and Cu(A) to the binuclear center formed by heme a3 and Cu(B). This cytochrome c oxidase shows proton pump activity across the membrane in addition to the electron transfer. The chain is Cytochrome c oxidase subunit 1 (ctaD) from Paracoccus versutus (Thiobacillus versutus).